Reading from the N-terminus, the 295-residue chain is tRNA dimethylallyltransferase (295 aa).

ATP is bound at residue 9–16 (GATATGKS). 11–16 (TATGKS) contacts substrate. An interaction with substrate tRNA region spans residues 34–37 (DSRQ).

The protein belongs to the IPP transferase family. Monomer. It depends on Mg(2+) as a cofactor.

It carries out the reaction adenosine(37) in tRNA + dimethylallyl diphosphate = N(6)-dimethylallyladenosine(37) in tRNA + diphosphate. In terms of biological role, catalyzes the transfer of a dimethylallyl group onto the adenine at position 37 in tRNAs that read codons beginning with uridine, leading to the formation of N6-(dimethylallyl)adenosine (i(6)A). This Nostoc sp. (strain PCC 7120 / SAG 25.82 / UTEX 2576) protein is tRNA dimethylallyltransferase.